The sequence spans 803 residues: Phosphoribosylformylglycinamidine synthase subunit PurL (803 aa).

Residue His-65 is part of the active site. Residues Tyr-68 and Lys-107 each coordinate ATP. Glu-109 serves as a coordination point for Mg(2+). Residues Ser-110–His-113 and Arg-132 each bind substrate. Catalysis depends on His-111, which acts as the Proton acceptor. Mg(2+) is bound at residue Asp-133. Gln-256 serves as a coordination point for substrate. Asp-284 contacts Mg(2+). A substrate-binding site is contributed by Glu-328–Gln-330. ATP is bound by residues Asn-537 and Gly-574. Residue Asn-575 coordinates Mg(2+). Ser-577 is a substrate binding site.

Belongs to the FGAMS family. In terms of assembly, monomer. Part of the FGAM synthase complex composed of 1 PurL, 1 PurQ and 2 PurS subunits.

It is found in the cytoplasm. It carries out the reaction N(2)-formyl-N(1)-(5-phospho-beta-D-ribosyl)glycinamide + L-glutamine + ATP + H2O = 2-formamido-N(1)-(5-O-phospho-beta-D-ribosyl)acetamidine + L-glutamate + ADP + phosphate + H(+). Its pathway is purine metabolism; IMP biosynthesis via de novo pathway; 5-amino-1-(5-phospho-D-ribosyl)imidazole from N(2)-formyl-N(1)-(5-phospho-D-ribosyl)glycinamide: step 1/2. In terms of biological role, part of the phosphoribosylformylglycinamidine synthase complex involved in the purines biosynthetic pathway. Catalyzes the ATP-dependent conversion of formylglycinamide ribonucleotide (FGAR) and glutamine to yield formylglycinamidine ribonucleotide (FGAM) and glutamate. The FGAM synthase complex is composed of three subunits. PurQ produces an ammonia molecule by converting glutamine to glutamate. PurL transfers the ammonia molecule to FGAR to form FGAM in an ATP-dependent manner. PurS interacts with PurQ and PurL and is thought to assist in the transfer of the ammonia molecule from PurQ to PurL. The polypeptide is Phosphoribosylformylglycinamidine synthase subunit PurL (Prochlorococcus marinus (strain NATL2A)).